Consider the following 412-residue polypeptide: UPF0761 membrane protein lpg0643 (412 aa).

Helical transmembrane passes span 36–56 (ALAF…LAIF), 99–119 (LSIW…FTIE), 137–157 (AFLL…LSLA), 177–197 (ILHY…YVVV), 210–230 (GGLV…YYLI), and 241–261 (AFAT…ITLL).

It belongs to the UPF0761 family.

It localises to the cell inner membrane. This Legionella pneumophila subsp. pneumophila (strain Philadelphia 1 / ATCC 33152 / DSM 7513) protein is UPF0761 membrane protein lpg0643.